The sequence spans 226 residues: MSLFVTFEGPEGSGKSTQARLLYESLHARRFPVILTREPGGTRIGDLIRRIVLDLQHTEMAPTAEMLLFSAARAQLVSEVIRPYLEQGGIVLCDRYADSTFAYQGYGLGRDLAELRVITAAATGGLRPDITFYLDISAAEGLERKRRKGARSTGQRGANNDEWNRLDARELEYHQRVEAGYRELIAADPERWRVLDARQSIEALAEQIGAIVEPYLASITRLETVL.

9–16 contributes to the ATP binding site; the sequence is GPEGSGKS.

The protein belongs to the thymidylate kinase family.

The catalysed reaction is dTMP + ATP = dTDP + ADP. Phosphorylation of dTMP to form dTDP in both de novo and salvage pathways of dTTP synthesis. The polypeptide is Thymidylate kinase (Roseiflexus sp. (strain RS-1)).